We begin with the raw amino-acid sequence, 314 residues long: Thymidylate synthase (314 aa).

DUMP contacts are provided by residues Arg-21 and 176-177 (RR). The active-site Nucleophile is the Cys-196. Residues 216–219 (RSAD), Asn-227, and 257–259 (HLY) contribute to the dUMP site. Residue Asp-219 participates in (6R)-5,10-methylene-5,6,7,8-tetrahydrofolate binding. Position 313 (Ser-313) interacts with (6R)-5,10-methylene-5,6,7,8-tetrahydrofolate.

The protein belongs to the thymidylate synthase family. Bacterial-type ThyA subfamily. As to quaternary structure, homodimer.

The protein localises to the cytoplasm. It catalyses the reaction dUMP + (6R)-5,10-methylene-5,6,7,8-tetrahydrofolate = 7,8-dihydrofolate + dTMP. It participates in pyrimidine metabolism; dTTP biosynthesis. Functionally, catalyzes the reductive methylation of 2'-deoxyuridine-5'-monophosphate (dUMP) to 2'-deoxythymidine-5'-monophosphate (dTMP) while utilizing 5,10-methylenetetrahydrofolate (mTHF) as the methyl donor and reductant in the reaction, yielding dihydrofolate (DHF) as a by-product. This enzymatic reaction provides an intracellular de novo source of dTMP, an essential precursor for DNA biosynthesis. The polypeptide is Thymidylate synthase (Listeria monocytogenes serotype 4b (strain CLIP80459)).